Consider the following 486-residue polypeptide: MSASDSSSAVVVLAAGAGTRMKSDLQKTLHSIGGRSLISHSLHAAAGLNPTHIVAVIGHGRDQVGPAVEDVATHLGREVRIAIQEEQNGTGHAVQCAMDQLEGFDGTIIVTNGDVPLLTSDTLGSLLAAHTATPTAVTVLTMNLDDPTGYGRIVRNADGEVTAIVEQKDASDEERSITEVNSGVFAFDATILRSALSQLKSDNAQGELYLTDVLGIARSEGHPVRAHIAADARELAGVNDRVQLAEAGAELNRRTVEAAMRGGATIVDPATTWIDVEVTIGRDVLINPGTQLRGTTSIGDRAEIGPDTTLTNMVIGTGASVIRTHGSDSEIGEDATVGPFTYIRPGTKLGAEGKLGGFVETKKATIGRGSKVPHLTYVGDATIGEYSNIGASSVFVNYDGVNKNHTTIGSHVRTGSDTMFIAPVTVGDGAYSGAGTVIKDDVPPGALAVSGGRQRNIEGWVQKKRPGTAAADAAAAAQNSVPNQEG.

Residues 1–241 are pyrophosphorylase; sequence MSASDSSSAV…ARELAGVNDR (241 aa). Residues 13–16, K27, Q84, and 89–90 each bind UDP-N-acetyl-alpha-D-glucosamine; these read LAAG and GT. Mg(2+) is bound at residue D114. UDP-N-acetyl-alpha-D-glucosamine-binding residues include G151, E166, N181, and N239. Mg(2+) is bound at residue N239. A linker region spans residues 242 to 262; sequence VQLAEAGAELNRRTVEAAMRG. The interval 263-486 is N-acetyltransferase; that stretch reads GATIVDPATT…AQNSVPNQEG (224 aa). 2 residues coordinate UDP-N-acetyl-alpha-D-glucosamine: R344 and K362. The active-site Proton acceptor is the H374. The UDP-N-acetyl-alpha-D-glucosamine site is built by Y377 and N388. Acetyl-CoA is bound by residues A391, 397–398, S416, and A434; that span reads NY. The segment at 464 to 486 is disordered; sequence KRPGTAAADAAAAAQNSVPNQEG.

It in the N-terminal section; belongs to the N-acetylglucosamine-1-phosphate uridyltransferase family. This sequence in the C-terminal section; belongs to the transferase hexapeptide repeat family. In terms of assembly, homotrimer. It depends on Mg(2+) as a cofactor.

The protein resides in the cytoplasm. The enzyme catalyses alpha-D-glucosamine 1-phosphate + acetyl-CoA = N-acetyl-alpha-D-glucosamine 1-phosphate + CoA + H(+). It catalyses the reaction N-acetyl-alpha-D-glucosamine 1-phosphate + UTP + H(+) = UDP-N-acetyl-alpha-D-glucosamine + diphosphate. It functions in the pathway nucleotide-sugar biosynthesis; UDP-N-acetyl-alpha-D-glucosamine biosynthesis; N-acetyl-alpha-D-glucosamine 1-phosphate from alpha-D-glucosamine 6-phosphate (route II): step 2/2. The protein operates within nucleotide-sugar biosynthesis; UDP-N-acetyl-alpha-D-glucosamine biosynthesis; UDP-N-acetyl-alpha-D-glucosamine from N-acetyl-alpha-D-glucosamine 1-phosphate: step 1/1. Its pathway is bacterial outer membrane biogenesis; LPS lipid A biosynthesis. In terms of biological role, catalyzes the last two sequential reactions in the de novo biosynthetic pathway for UDP-N-acetylglucosamine (UDP-GlcNAc). The C-terminal domain catalyzes the transfer of acetyl group from acetyl coenzyme A to glucosamine-1-phosphate (GlcN-1-P) to produce N-acetylglucosamine-1-phosphate (GlcNAc-1-P), which is converted into UDP-GlcNAc by the transfer of uridine 5-monophosphate (from uridine 5-triphosphate), a reaction catalyzed by the N-terminal domain. The polypeptide is Bifunctional protein GlmU (Corynebacterium efficiens (strain DSM 44549 / YS-314 / AJ 12310 / JCM 11189 / NBRC 100395)).